A 565-amino-acid chain; its full sequence is Proline--tRNA ligase (565 aa).

Belongs to the class-II aminoacyl-tRNA synthetase family. ProS type 1 subfamily. As to quaternary structure, homodimer.

The protein resides in the cytoplasm. It catalyses the reaction tRNA(Pro) + L-proline + ATP = L-prolyl-tRNA(Pro) + AMP + diphosphate. In terms of biological role, catalyzes the attachment of proline to tRNA(Pro) in a two-step reaction: proline is first activated by ATP to form Pro-AMP and then transferred to the acceptor end of tRNA(Pro). As ProRS can inadvertently accommodate and process non-cognate amino acids such as alanine and cysteine, to avoid such errors it has two additional distinct editing activities against alanine. One activity is designated as 'pretransfer' editing and involves the tRNA(Pro)-independent hydrolysis of activated Ala-AMP. The other activity is designated 'posttransfer' editing and involves deacylation of mischarged Ala-tRNA(Pro). The misacylated Cys-tRNA(Pro) is not edited by ProRS. In Lactobacillus acidophilus (strain ATCC 700396 / NCK56 / N2 / NCFM), this protein is Proline--tRNA ligase.